The chain runs to 515 residues: FAD-dependent oxidoreductase domain-containing protein 1 homolog (515 aa).

A disordered region spans residues Ala-18 to Leu-37. A helical membrane pass occupies residues Val-100–Leu-116.

Associates with mitochondrial complex I assembly intermediates during its biogenesis. FAD serves as cofactor.

Its subcellular location is the mitochondrion inner membrane. In terms of biological role, involved in the assembly of the mitochondrial membrane respiratory chain NADH dehydrogenase (Complex I). The polypeptide is FAD-dependent oxidoreductase domain-containing protein 1 homolog (Drosophila melanogaster (Fruit fly)).